Reading from the N-terminus, the 277-residue chain is Large ribosomal subunit protein uL2 (277 aa).

Disordered regions lie at residues 32–58 and 225–277; these read KSLT…RGGG and VAMN…RRNN.

Belongs to the universal ribosomal protein uL2 family. Part of the 50S ribosomal subunit. Forms a bridge to the 30S subunit in the 70S ribosome.

Functionally, one of the primary rRNA binding proteins. Required for association of the 30S and 50S subunits to form the 70S ribosome, for tRNA binding and peptide bond formation. It has been suggested to have peptidyltransferase activity; this is somewhat controversial. Makes several contacts with the 16S rRNA in the 70S ribosome. This is Large ribosomal subunit protein uL2 from Borrelia recurrentis (strain A1).